A 348-amino-acid polypeptide reads, in one-letter code: MITRRQSTEIRLGNLTIGGSAPISVQSMTKTDTRNIPATIAQIKELEECGCEIIRLAIPDMEAASALKSIRPKVKIPIVADIHFDYRLALASLSAGVDGLRLNPGNIGDPERVKAVVKSAKEREIPIRIGVNAGSLPKDLPPELTIAQKMVKAAMGHIKILEGLDFGLIKVSLKAFDVPTTIEAYTQIASLIPYPLHVGITETGTPKTGLVRSAVGIGNLLYMGIGDTIRVSLTAPPHEEVFAAYEILKSLNLRQRGPILVSCPTCSRTEVDIVGIASQVQEALNKIDKPIRVAVMGCAVNGPGEAKEADLGIACGKGQGLLFRKGEKIAVVPEDELVDALLREIASL.

[4Fe-4S] cluster-binding residues include cysteine 263, cysteine 266, cysteine 298, and glutamate 305.

Belongs to the IspG family. Requires [4Fe-4S] cluster as cofactor.

It carries out the reaction (2E)-4-hydroxy-3-methylbut-2-enyl diphosphate + oxidized [flavodoxin] + H2O + 2 H(+) = 2-C-methyl-D-erythritol 2,4-cyclic diphosphate + reduced [flavodoxin]. It functions in the pathway isoprenoid biosynthesis; isopentenyl diphosphate biosynthesis via DXP pathway; isopentenyl diphosphate from 1-deoxy-D-xylulose 5-phosphate: step 5/6. Converts 2C-methyl-D-erythritol 2,4-cyclodiphosphate (ME-2,4cPP) into 1-hydroxy-2-methyl-2-(E)-butenyl 4-diphosphate. This chain is 4-hydroxy-3-methylbut-2-en-1-yl diphosphate synthase (flavodoxin), found in Dehalococcoides mccartyi (strain ATCC BAA-2100 / JCM 16839 / KCTC 5957 / BAV1).